We begin with the raw amino-acid sequence, 236 residues long: MKYKLLPCLLAIFLTGCDRTEVTLSFTPEMASFSNEFDFDPLRGPVKDFTQTLMDEQGEVTKRVSGTLSEEGCFDSLELLDLENNTVVALVLDANYYRDAETLEKRVRLQGKCQLAELPSAGVSWETDDNGFVIKASSKQMQMEYRYDDQGYPLGKTTKSNDKTLSVSATPSTDPIKKLDYTAVTLLNNQRVGNVKQSCEYDSHANPVDCQLIIVDEGVKPAVERVYTIKNTIDYY.

The N-terminal stretch at 1–16 (MKYKLLPCLLAIFLTG) is a signal peptide. Cys-17 carries N-palmitoyl cysteine lipidation. Residue Cys-17 is the site of S-diacylglycerol cysteine attachment.

Belongs to the UPF0257 family.

The protein resides in the cell membrane. In Shigella flexneri, this protein is UPF0257 lipoprotein YnfC (ynfC).